Here is a 160-residue protein sequence, read N- to C-terminus: uncharacterized protein (160 aa).

This is an uncharacterized protein from Bacillus subtilis (strain 168).